A 394-amino-acid polypeptide reads, in one-letter code: ATP phosphoribosyltransferase regulatory subunit (394 aa).

Belongs to the class-II aminoacyl-tRNA synthetase family. HisZ subfamily. In terms of assembly, heteromultimer composed of HisG and HisZ subunits.

It is found in the cytoplasm. The protein operates within amino-acid biosynthesis; L-histidine biosynthesis; L-histidine from 5-phospho-alpha-D-ribose 1-diphosphate: step 1/9. Required for the first step of histidine biosynthesis. May allow the feedback regulation of ATP phosphoribosyltransferase activity by histidine. The protein is ATP phosphoribosyltransferase regulatory subunit of Pseudomonas paraeruginosa (strain DSM 24068 / PA7) (Pseudomonas aeruginosa (strain PA7)).